Reading from the N-terminus, the 149-residue chain is Transcriptional repressor NrdR (149 aa).

A zinc finger spans residues 3–34 (CPFCSATDTKVIDSRLVAEGHQVRRRRECTEC). Residues 49–139 (PRVIKRDGSR…VYRAFEDVSE (91 aa)) enclose the ATP-cone domain.

This sequence belongs to the NrdR family. Zn(2+) serves as cofactor.

In terms of biological role, negatively regulates transcription of bacterial ribonucleotide reductase nrd genes and operons by binding to NrdR-boxes. This Shewanella putrefaciens (strain CN-32 / ATCC BAA-453) protein is Transcriptional repressor NrdR.